We begin with the raw amino-acid sequence, 147 residues long: Peptide methionine sulfoxide reductase MsrA (147 aa).

Residue Cys-10 is part of the active site.

The protein belongs to the MsrA Met sulfoxide reductase family.

The catalysed reaction is L-methionyl-[protein] + [thioredoxin]-disulfide + H2O = L-methionyl-(S)-S-oxide-[protein] + [thioredoxin]-dithiol. It carries out the reaction [thioredoxin]-disulfide + L-methionine + H2O = L-methionine (S)-S-oxide + [thioredoxin]-dithiol. In terms of biological role, has an important function as a repair enzyme for proteins that have been inactivated by oxidation. Catalyzes the reversible oxidation-reduction of methionine sulfoxide in proteins to methionine. In Pelagibacter ubique (strain HTCC1062), this protein is Peptide methionine sulfoxide reductase MsrA.